Reading from the N-terminus, the 162-residue chain is Cytochrome c-type biogenesis protein CcmE (162 aa).

Residues 1–7 (MTRKQRR) are Cytoplasmic-facing. A helical; Signal-anchor for type II membrane protein transmembrane segment spans residues 8 to 28 (LTMIGGSLVVLAIAAALVLNA). Over 29–162 (LRDSIVFFST…EASGKQGVSQ (134 aa)) the chain is Periplasmic. His-122 and Tyr-126 together coordinate heme. The segment at 138 to 162 (QGHWKDDYGPQAGAVEASGKQGVSQ) is disordered.

This sequence belongs to the CcmE/CycJ family.

The protein localises to the cell inner membrane. Functionally, heme chaperone required for the biogenesis of c-type cytochromes. Transiently binds heme delivered by CcmC and transfers the heme to apo-cytochromes in a process facilitated by CcmF and CcmH. The polypeptide is Cytochrome c-type biogenesis protein CcmE (Nitrobacter hamburgensis (strain DSM 10229 / NCIMB 13809 / X14)).